We begin with the raw amino-acid sequence, 467 residues long: Methylenetetrahydrofolate--tRNA-(uracil-5-)-methyltransferase TrmFO (467 aa).

Residue Gly-11–Gly-16 participates in FAD binding.

It belongs to the MnmG family. TrmFO subfamily. Requires FAD as cofactor.

It localises to the cytoplasm. It carries out the reaction uridine(54) in tRNA + (6R)-5,10-methylene-5,6,7,8-tetrahydrofolate + NADH + H(+) = 5-methyluridine(54) in tRNA + (6S)-5,6,7,8-tetrahydrofolate + NAD(+). The enzyme catalyses uridine(54) in tRNA + (6R)-5,10-methylene-5,6,7,8-tetrahydrofolate + NADPH + H(+) = 5-methyluridine(54) in tRNA + (6S)-5,6,7,8-tetrahydrofolate + NADP(+). Its function is as follows. Catalyzes the folate-dependent formation of 5-methyl-uridine at position 54 (M-5-U54) in all tRNAs. This chain is Methylenetetrahydrofolate--tRNA-(uracil-5-)-methyltransferase TrmFO, found in Prochlorococcus marinus (strain MIT 9303).